We begin with the raw amino-acid sequence, 229 residues long: Prolactin (229 aa).

Residues 1–30 (MDSKGSSQKGSRLLLLLVVSNLLLCQGVVS) form the signal peptide. Cys34 and Cys41 form a disulfide bridge. A phosphoserine mark is found at Ser56, Ser64, and Ser120. 2 cysteine pairs are disulfide-bonded: Cys88/Cys204 and Cys221/Cys229.

Belongs to the somatotropin/prolactin family. Interacts with PRLR.

Its subcellular location is the secreted. Its function is as follows. Prolactin acts primarily on the mammary gland by promoting lactation. This Bos taurus (Bovine) protein is Prolactin (PRL).